The chain runs to 97 residues: Secreted RxLR effector protein BLR05 (97 aa).

Residues 1–21 (MGPQHLLALVVVSILVAAGNA) form the signal peptide. Positions 32–60 (RALRPSVIADQEHAVHAIPATNFISKDED) match the RxLR-dEER motif. Residues 69-89 (IEIIRIAIFSLLVVGVFAIMA) traverse the membrane as a helical segment.

It belongs to the RxLR effector family. In terms of assembly, interacts with host transcription factor NAC069.

The protein localises to the secreted. The protein resides in the host endoplasmic reticulum membrane. Functionally, secreted effector that inhibits stress-induced relocalization of the transcription factor NAC069 to the nucleus, thus affecting its broad role in abiotic and biotic stress responses. The chain is Secreted RxLR effector protein BLR05 from Bremia lactucae (Lettuce downy mildew).